The sequence spans 217 residues: Phosphatidylcholine synthase (217 aa).

Residues 1-8 (ACIGVFSL) form a helical membrane-spanning segment. Over 9–16 (VKIYQHEY) the chain is Periplasmic. The chain crosses the membrane as a helical span at residues 17–37 (IFALWLMFITVVIDAVDGTLA). The Cytoplasmic segment spans residues 38 to 50 (RLVNIKKILPKID). Residues 51-71 (GALLDNIVDYLNYVITPCFFL) form a helical membrane-spanning segment. At 72-77 (LVKPGM) the chain is on the periplasmic side. Residues 78-98 (LPPEYSVFLIAAVSITSAYQF) form a helical membrane-spanning segment. The Cytoplasmic portion of the chain corresponds to 99–107 (CQCDAKTPD). Residues 108-128 (HFFKGFPCYWNITILYMFIFN) form a helical membrane-spanning segment. Residue T129 is a topological domain, periplasmic. The helical transmembrane segment at 130 to 149 (SAATNAIILIILSILIFVPV) threads the bilayer. The Cytoplasmic segment spans residues 150 to 164 (KYVYPSRLDYLTESR). A helical membrane pass occupies residues 165-185 (ILKILMHICSIIYAVSSICIL). Topologically, residues 186 to 191 (ISYPNT) are periplasmic. The chain crosses the membrane as a helical span at residues 192-212 (NIICLSLSVAYVGMYLFLSFY). Residues 213-217 (RTYYP) lie on the Cytoplasmic side of the membrane.

It belongs to the CDP-alcohol phosphatidyltransferase class-I family. Requires Mn(2+) as cofactor.

The protein resides in the cell inner membrane. The catalysed reaction is a CDP-1,2-diacyl-sn-glycerol + choline = a 1,2-diacyl-sn-glycero-3-phosphocholine + CMP + H(+). In terms of biological role, condenses choline with CDP-diglyceride to produce phosphatidylcholine and CMP. This chain is Phosphatidylcholine synthase, found in Legionella bozemanae (Fluoribacter bozemanae).